We begin with the raw amino-acid sequence, 200 residues long: Protein GrpE (200 aa).

The segment covering 1–11 has biased composition (polar residues); that stretch reads MSNQTNKAQDN. Residues 1–25 form a disordered region; that stretch reads MSNQTNKAQDNQVEEIVEGELLNEN.

This sequence belongs to the GrpE family. In terms of assembly, homodimer.

It localises to the cytoplasm. Functionally, participates actively in the response to hyperosmotic and heat shock by preventing the aggregation of stress-denatured proteins, in association with DnaK and GrpE. It is the nucleotide exchange factor for DnaK and may function as a thermosensor. Unfolded proteins bind initially to DnaJ; upon interaction with the DnaJ-bound protein, DnaK hydrolyzes its bound ATP, resulting in the formation of a stable complex. GrpE releases ADP from DnaK; ATP binding to DnaK triggers the release of the substrate protein, thus completing the reaction cycle. Several rounds of ATP-dependent interactions between DnaJ, DnaK and GrpE are required for fully efficient folding. The chain is Protein GrpE from Shewanella pealeana (strain ATCC 700345 / ANG-SQ1).